A 429-amino-acid polypeptide reads, in one-letter code: MANIVVVGTQWGDEGKGKIVDLLAAFADLVVRFQGGNNAGHTLVVNGESFISHLVPSGILQGKMCLIGNGVVVDPAVLTEEMAALRSRGVAVIPEKFKVSASAHIIMPYHKTIDLVREEAKGHEKIGTTGRGIGPCYEDKVGRNGLRFVDMLDLPAFREKMARQVKEKNLYLERMFGAAPLDVDGAVAEYVGYAETLAPYIADVSRILADASDEGRQVLFEGAQGTYLDIDHGTYPYVTSSNTVAGNACCGSGIGPRDLSGVLGIVKAYTTRVGEGPFPTELFDDVGDFMQRTGSEFGATTGRKRRCGWLDAVMLKSAARLNGLTGLAITKLDVLTGLDTLEICTAYRYQGKTLSDFPADVKTLSQCEPVYEAVQGWQEDISGVRSAADLPDAARRYLDRITELVGVRVDIVSVGAGRDQTVVINNPFA.

GTP is bound by residues 12 to 18 (GDEGKGK) and 40 to 42 (GHT). Asp13 (proton acceptor) is an active-site residue. Asp13 and Gly40 together coordinate Mg(2+). Residues 13-16 (DEGK), 38-41 (NAGH), Thr129, Arg143, Gln224, Thr239, and Arg303 contribute to the IMP site. Catalysis depends on His41, which acts as the Proton donor. Position 299 to 305 (299 to 305 (ATTGRKR)) interacts with substrate. GTP is bound by residues Arg305, 331–333 (KLD), and 413–415 (SVG).

This sequence belongs to the adenylosuccinate synthetase family. As to quaternary structure, homodimer. It depends on Mg(2+) as a cofactor.

The protein resides in the cytoplasm. It carries out the reaction IMP + L-aspartate + GTP = N(6)-(1,2-dicarboxyethyl)-AMP + GDP + phosphate + 2 H(+). Its pathway is purine metabolism; AMP biosynthesis via de novo pathway; AMP from IMP: step 1/2. Plays an important role in the de novo pathway of purine nucleotide biosynthesis. Catalyzes the first committed step in the biosynthesis of AMP from IMP. The polypeptide is Adenylosuccinate synthetase (Desulfosudis oleivorans (strain DSM 6200 / JCM 39069 / Hxd3) (Desulfococcus oleovorans)).